Consider the following 479-residue polypeptide: tRNA-2-methylthio-N(6)-dimethylallyladenosine synthase (479 aa).

An MTTase N-terminal domain is found at K6 to S122. 6 residues coordinate [4Fe-4S] cluster: C15, C51, C85, C172, C176, and C179. Residues R158–E390 form the Radical SAM core domain. A TRAM domain is found at Q393–T464.

It belongs to the methylthiotransferase family. MiaB subfamily. In terms of assembly, monomer. [4Fe-4S] cluster serves as cofactor.

Its subcellular location is the cytoplasm. It catalyses the reaction N(6)-dimethylallyladenosine(37) in tRNA + (sulfur carrier)-SH + AH2 + 2 S-adenosyl-L-methionine = 2-methylsulfanyl-N(6)-dimethylallyladenosine(37) in tRNA + (sulfur carrier)-H + 5'-deoxyadenosine + L-methionine + A + S-adenosyl-L-homocysteine + 2 H(+). Catalyzes the methylthiolation of N6-(dimethylallyl)adenosine (i(6)A), leading to the formation of 2-methylthio-N6-(dimethylallyl)adenosine (ms(2)i(6)A) at position 37 in tRNAs that read codons beginning with uridine. This chain is tRNA-2-methylthio-N(6)-dimethylallyladenosine synthase, found in Rhodopirellula baltica (strain DSM 10527 / NCIMB 13988 / SH1).